A 95-amino-acid chain; its full sequence is Putative pterin-4-alpha-carbinolamine dehydratase (95 aa).

Belongs to the pterin-4-alpha-carbinolamine dehydratase family.

The enzyme catalyses (4aS,6R)-4a-hydroxy-L-erythro-5,6,7,8-tetrahydrobiopterin = (6R)-L-erythro-6,7-dihydrobiopterin + H2O. This chain is Putative pterin-4-alpha-carbinolamine dehydratase, found in Nocardia farcinica (strain IFM 10152).